The sequence spans 215 residues: Probable transaldolase (215 aa).

Lysine 83 acts as the Schiff-base intermediate with substrate in catalysis.

The protein belongs to the transaldolase family. Type 3B subfamily.

It is found in the cytoplasm. It catalyses the reaction D-sedoheptulose 7-phosphate + D-glyceraldehyde 3-phosphate = D-erythrose 4-phosphate + beta-D-fructose 6-phosphate. The protein operates within carbohydrate degradation; pentose phosphate pathway; D-glyceraldehyde 3-phosphate and beta-D-fructose 6-phosphate from D-ribose 5-phosphate and D-xylulose 5-phosphate (non-oxidative stage): step 2/3. Functionally, transaldolase is important for the balance of metabolites in the pentose-phosphate pathway. The polypeptide is Probable transaldolase (Methanococcus maripaludis (strain C5 / ATCC BAA-1333)).